A 418-amino-acid chain; its full sequence is ATP phosphoribosyltransferase regulatory subunit (418 aa).

It belongs to the class-II aminoacyl-tRNA synthetase family. HisZ subfamily. In terms of assembly, heteromultimer composed of HisG and HisZ subunits.

It is found in the cytoplasm. Its pathway is amino-acid biosynthesis; L-histidine biosynthesis; L-histidine from 5-phospho-alpha-D-ribose 1-diphosphate: step 1/9. Functionally, required for the first step of histidine biosynthesis. May allow the feedback regulation of ATP phosphoribosyltransferase activity by histidine. The protein is ATP phosphoribosyltransferase regulatory subunit of Halothermothrix orenii (strain H 168 / OCM 544 / DSM 9562).